Here is a 293-residue protein sequence, read N- to C-terminus: ATP synthase gamma chain (293 aa).

The protein belongs to the ATPase gamma chain family. In terms of assembly, F-type ATPases have 2 components, CF(1) - the catalytic core - and CF(0) - the membrane proton channel. CF(1) has five subunits: alpha(3), beta(3), gamma(1), delta(1), epsilon(1). CF(0) has three main subunits: a, b and c.

The protein resides in the cell inner membrane. In terms of biological role, produces ATP from ADP in the presence of a proton gradient across the membrane. The gamma chain is believed to be important in regulating ATPase activity and the flow of protons through the CF(0) complex. This is ATP synthase gamma chain from Gluconacetobacter diazotrophicus (strain ATCC 49037 / DSM 5601 / CCUG 37298 / CIP 103539 / LMG 7603 / PAl5).